The sequence spans 560 residues: Mitogen-activated protein kinase kinase kinase 3 (560 aa).

The tract at residues 70-91 (KRQSSSSSDNTSDKEEVETEET) is disordered. Residues 303-557 (WLKGQLLGRG…AAELLHHPFV (255 aa)) enclose the Protein kinase domain. ATP-binding positions include 309-317 (LGRGSYASV) and K331. D426 (proton acceptor) is an active-site residue.

Belongs to the protein kinase superfamily. STE Ser/Thr protein kinase family. MAP kinase kinase kinase subfamily. Expressed at low levels in roots, stems, siliques, leaves, seedlings and flower buds.

The enzyme catalyses L-seryl-[protein] + ATP = O-phospho-L-seryl-[protein] + ADP + H(+). It catalyses the reaction L-threonyl-[protein] + ATP = O-phospho-L-threonyl-[protein] + ADP + H(+). The sequence is that of Mitogen-activated protein kinase kinase kinase 3 from Arabidopsis thaliana (Mouse-ear cress).